The sequence spans 88 residues: Meiosis-expressed gene 1 protein (88 aa).

The protein belongs to the MEIG1 family. As to quaternary structure, interacts with PACRG. Interacts with MORN3. In terms of tissue distribution, expressed in the testes (at protein level). Expressed in the ovary. Several isoforms have been identified differing in their 5'-untranslated exons. These isoforms show different tissue expression. Some are expressed in various tissues, including lung, liver, brain, testis, oviduct and oocytes. Some are testis-specific.

Functionally, essential for spermiogenesis. The protein is Meiosis-expressed gene 1 protein of Mus musculus (Mouse).